Consider the following 307-residue polypeptide: Protoheme IX farnesyltransferase (307 aa).

A run of 8 helical transmembrane segments spans residues 32–52 (MGIV…ALHF), 65–85 (FFTI…NNYI), 108–128 (PGFA…FLLL), 131–151 (PMAV…YTLW), 158–178 (LNTV…WAAI), 186–206 (IAWM…LALA), 251–271 (LGIT…ALGL), and 287–307 (FVYS…VTFF).

Belongs to the UbiA prenyltransferase family. Protoheme IX farnesyltransferase subfamily. Interacts with CtaA.

Its subcellular location is the cell membrane. The catalysed reaction is heme b + (2E,6E)-farnesyl diphosphate + H2O = Fe(II)-heme o + diphosphate. Its pathway is porphyrin-containing compound metabolism; heme O biosynthesis; heme O from protoheme: step 1/1. Its function is as follows. Converts heme B (protoheme IX) to heme O by substitution of the vinyl group on carbon 2 of heme B porphyrin ring with a hydroxyethyl farnesyl side group. This chain is Protoheme IX farnesyltransferase, found in Bacillus mycoides (strain KBAB4) (Bacillus weihenstephanensis).